The sequence spans 272 residues: uncharacterized protein (272 aa).

Positions 193 to 250 (AFLLPNNSKGVEKSEENEDGVTDNDSSNVNSSTNESPNPTDINVCSNDDATDNTENNL) are disordered. Positions 215–233 (DNDSSNVNSSTNESPNPTD) are enriched in low complexity. Polar residues predominate over residues 235-248 (NVCSNDDATDNTEN).

This sequence belongs to the pal1 family.

It localises to the cytoplasm. The protein resides in the nucleus. This is an uncharacterized protein from Schizosaccharomyces pombe (strain 972 / ATCC 24843) (Fission yeast).